Reading from the N-terminus, the 326-residue chain is dTDP-4-dehydro-6-deoxy-D-allose reductase (326 aa).

Residues 15 to 21 (GALGFIG) and 129 to 132 (MSSS) contribute to the NAD(+) site. The active-site Proton donor/acceptor is the tyrosine 160. NAD(+) is bound by residues lysine 164 and 187 to 190 (PGNV).

It belongs to the NAD(P)-dependent epimerase/dehydratase family.

The enzyme catalyses dTDP-6-deoxy-alpha-D-allose + NAD(+) = dTDP-4-dehydro-6-deoxy-alpha-D-allose + NADH + H(+). It catalyses the reaction dTDP-6-deoxy-alpha-D-allose + NADP(+) = dTDP-4-dehydro-6-deoxy-alpha-D-allose + NADPH + H(+). Its function is as follows. Catalyzes the stereospecific reduction of the C-4 keto group of dTDP-4-dehydro-6-deoxy-D-allose, leading to dTDP-6-deoxy-D-allose, an intermediate in the biosynthesis of the mycinose moiety of dihydrochalcomycin (GERI-155) antibiotic. Cannot directly reduce dTDP-4-dehydro-6-deoxyglucose, and thus acts after the epimerization step catalyzed by GerF. This is dTDP-4-dehydro-6-deoxy-D-allose reductase (gerKI) from Streptomyces sp.